A 215-amino-acid polypeptide reads, in one-letter code: Cytochrome b6 (215 aa).

The chain crosses the membrane as a helical span at residues 32-52 (IFYCLGGITLTCFLVQVATGF). Cys-35 contacts heme c. Heme b contacts are provided by His-86 and His-100. A run of 3 helical transmembrane segments spans residues 90–110 (ASMMVLMMILHVFRVYLTGGF), 116–136 (LTWVTGVILAVLTVSFGVTGY), and 186–206 (LHTFILPFLTAVFMLMHFLMI). 2 residues coordinate heme b: His-187 and His-202.

This sequence belongs to the cytochrome b family. PetB subfamily. As to quaternary structure, the 4 large subunits of the cytochrome b6-f complex are cytochrome b6, subunit IV (17 kDa polypeptide, PetD), cytochrome f and the Rieske protein, while the 4 small subunits are PetG, PetL, PetM and PetN. The complex functions as a dimer. The cofactor is heme b. Heme c is required as a cofactor.

It localises to the plastid. The protein resides in the chloroplast thylakoid membrane. In terms of biological role, component of the cytochrome b6-f complex, which mediates electron transfer between photosystem II (PSII) and photosystem I (PSI), cyclic electron flow around PSI, and state transitions. This chain is Cytochrome b6, found in Welwitschia mirabilis (Tree tumbo).